Consider the following 100-residue polypeptide: Urease subunit gamma (100 aa).

The protein belongs to the urease gamma subunit family. As to quaternary structure, heterotrimer of UreA (gamma), UreB (beta) and UreC (alpha) subunits. Three heterotrimers associate to form the active enzyme.

The protein resides in the cytoplasm. The enzyme catalyses urea + 2 H2O + H(+) = hydrogencarbonate + 2 NH4(+). It participates in nitrogen metabolism; urea degradation; CO(2) and NH(3) from urea (urease route): step 1/1. In Halalkalibacterium halodurans (strain ATCC BAA-125 / DSM 18197 / FERM 7344 / JCM 9153 / C-125) (Bacillus halodurans), this protein is Urease subunit gamma.